The sequence spans 430 residues: Adenylosuccinate synthetase (430 aa).

GTP is bound by residues glycine 12–lysine 18 and glycine 40–threonine 42. Aspartate 13 (proton acceptor) is an active-site residue. Mg(2+) contacts are provided by aspartate 13 and glycine 40. IMP contacts are provided by residues aspartate 13–lysine 16, asparagine 38–histidine 41, threonine 130, arginine 144, glutamine 224, threonine 239, and arginine 303. Histidine 41 functions as the Proton donor in the catalytic mechanism. Position 299-305 (threonine 299–arginine 305) interacts with substrate. GTP-binding positions include arginine 305, lysine 331–aspartate 333, and serine 413–serine 415.

Belongs to the adenylosuccinate synthetase family. In terms of assembly, homodimer. The cofactor is Mg(2+).

Its subcellular location is the cytoplasm. It carries out the reaction IMP + L-aspartate + GTP = N(6)-(1,2-dicarboxyethyl)-AMP + GDP + phosphate + 2 H(+). Its pathway is purine metabolism; AMP biosynthesis via de novo pathway; AMP from IMP: step 1/2. In terms of biological role, plays an important role in the de novo pathway of purine nucleotide biosynthesis. Catalyzes the first committed step in the biosynthesis of AMP from IMP. In Cereibacter sphaeroides (strain ATCC 17025 / ATH 2.4.3) (Rhodobacter sphaeroides), this protein is Adenylosuccinate synthetase.